We begin with the raw amino-acid sequence, 441 residues long: Serine/threonine-protein kinase prk-2 (441 aa).

The region spanning 31–285 (YKLKAELGRG…LEAILNHPWV (255 aa)) is the Protein kinase domain. Residues 37-45 (LGRGGFGVV) and Lys60 contribute to the ATP site. The active-site Proton acceptor is Asp158. The segment at 301–364 (QKKTSESSDD…NQKKPNHKEF (64 aa)) is disordered. Residues 303-320 (KTSESSDDHHSETLGDHS) are compositionally biased toward basic and acidic residues. Positions 328–338 (PPTSSVSQQPG) are enriched in polar residues.

This sequence belongs to the protein kinase superfamily. Ser/Thr protein kinase family. PIM subfamily. Requires Mg(2+) as cofactor.

The enzyme catalyses L-seryl-[protein] + ATP = O-phospho-L-seryl-[protein] + ADP + H(+). The catalysed reaction is L-threonyl-[protein] + ATP = O-phospho-L-threonyl-[protein] + ADP + H(+). Involved in the negative regulation of synaptic differentiation in PLM neurons. The chain is Serine/threonine-protein kinase prk-2 from Caenorhabditis elegans.